Here is a 688-residue protein sequence, read N- to C-terminus: G-protein coupled receptor-associated protein LMBRD2 (688 aa).

Residues 1-3 (MSG) lie on the Extracellular side of the membrane. Residues 4–21 (AALGLEIVFVFFLALFLL) form a helical membrane-spanning segment. Over 22–32 (HRYGDFKKQHR) the chain is Cytoplasmic. A helical membrane pass occupies residues 33–53 (LVIIATLLAWYLCFLIVFILP). Residues 54 to 99 (LDVSTTIYNRCKLAVNSSPAESNSSFVTLAPSKQQCFKPWSYIPNG) are Extracellular-facing. N-linked (GlcNAc...) asparagine glycosylation is present at asparagine 76. A helical transmembrane segment spans residues 100 to 120 (IMPIFWRVVYWTSQFLTWILL). At 121 to 144 (PFMQSYARSGGFSITGKIKTALIE) the chain is on the cytoplasmic side. A helical transmembrane segment spans residues 145–165 (NAIYYGTYLLIFGAFLIYVAV). Residues 166-180 (NPKFNLQWNQLQTIG) are Extracellular-facing. A helical membrane pass occupies residues 181–201 (IAAANTWGLFLLVLLLGYGLV). Residues 202–381 (EIPRSHWNGA…ECLLRPWFYR (180 aa)) lie on the Cytoplasmic side of the membrane. Residues 222–254 (FKAAKLMTEKADAEENLEDIMEEVRKVSESIKY) are a coiled coil. A helical transmembrane segment spans residues 382-402 (VLAVVLAAFSVIVVWSECTFF). At 403 to 426 (STRPVLSLVAVFIQLAEKTYNYIY) the chain is on the extracellular side. The helical transmembrane segment at 427 to 447 (IEMACFLTIFFLSICVYSTVF) threads the bilayer. Topologically, residues 448-467 (RIRVFNYYYLASHHQTDAYS) are cytoplasmic. Residues 468–488 (LLFSGMLFCRLTPPLCLNFLG) traverse the membrane as a helical segment. The Extracellular portion of the chain corresponds to 489-515 (LTHMDATISHTDAQPTAYTSIMGSMKV). Residues 516-536 (LSFIADGFYIYYPMLVVILCI) form a helical membrane-spanning segment. Topologically, residues 537 to 688 (ATYFSLGTRC…MSRSRIFEDV (152 aa)) are cytoplasmic. Residues 600–617 (REDSTRNRVVHTEQKESS) are compositionally biased toward basic and acidic residues. A disordered region spans residues 600 to 673 (REDSTRNRVV…ESDSGRYQPG (74 aa)). Residues 618–634 (FSETNTNRPLSKYTRTN) are compositionally biased toward polar residues. Residues 635-644 (GRTERDRIEL) are compositionally biased toward basic and acidic residues.

It belongs to the LIMR family.

Its subcellular location is the cell membrane. May associate with G-protein coupled receptors and regulate downstream signaling pathways. In Gallus gallus (Chicken), this protein is G-protein coupled receptor-associated protein LMBRD2.